Here is a 113-residue protein sequence, read N- to C-terminus: MNTVRVTFLLVFVLAVSLGQADKDENRMEVQEKTEQGKSYLDFAENLLLQKLEELEAKLLEEDSEESRNSRQKRCIGEGVPCDENDPRCCSGLVCLKPTLHGIWYKSYYCYKK.

The N-terminal stretch at 1–21 (MNTVRVTFLLVFVLAVSLGQA) is a signal peptide. A propeptide spanning residues 22–74 (DKDENRMEVQEKTEQGKSYLDFAENLLLQKLEELEAKLLEEDSEESRNSRQKR) is cleaved from the precursor. Residues 61-83 (EEDSEESRNSRQKRCIGEGVPCD) are disordered. Disulfide bonds link C75-C90, C82-C95, and C89-C110.

Belongs to the neurotoxin 14 (magi-1) family. 01 (HNTX-16) subfamily. Expressed by the venom gland.

It localises to the secreted. Its function is as follows. Probable ion channel inhibitor. This chain is U11-theraphotoxin-Hhn1a, found in Cyriopagopus hainanus (Chinese bird spider).